The sequence spans 1076 residues: ESX secretion system protein YueB (1076 aa).

A helical membrane pass occupies residues 9 to 29 (IKLISAVIIILLLPVLFFRFI). 2 disordered regions span residues 372 to 404 (RLSL…DIED) and 423 to 552 (IKDI…ETDI). Basic and acidic residues predominate over residues 423–439 (IKDISEGLKEPEQEKPT). 2 stretches are compositionally biased toward polar residues: residues 449–495 (DDSP…NIET) and 503–522 (SKNV…SKTD). The stretch at 552-622 (ISGAKKRLNE…TKKLVDFDNN (71 aa)) forms a coiled coil. Helical transmembrane passes span 904 to 924 (TVPP…IGYF), 938 to 958 (ALFG…GLNI), 964 to 984 (DQTI…SAFI), 995 to 1015 (GWVA…DLIM), and 1040 to 1060 (TMGI…PLII).

The protein belongs to the EsaA family.

Its subcellular location is the cell membrane. Its function is as follows. Required for YukE secretion. Probable component or regulator of the ESX/ESAT-6-like secretion system (BsEss). Bacteriophage SPP1 receptor. Essential for the irreversible adsorption of the bacteriophage. The chain is ESX secretion system protein YueB (yueB) from Bacillus subtilis (strain 168).